Here is a 121-residue protein sequence, read N- to C-terminus: Putative iron-sulfur cluster insertion protein ErpA (121 aa).

Iron-sulfur cluster contacts are provided by cysteine 49, cysteine 113, and cysteine 115.

This sequence belongs to the HesB/IscA family. As to quaternary structure, homodimer. It depends on iron-sulfur cluster as a cofactor.

Required for insertion of 4Fe-4S clusters. This is Putative iron-sulfur cluster insertion protein ErpA from Methylibium petroleiphilum (strain ATCC BAA-1232 / LMG 22953 / PM1).